We begin with the raw amino-acid sequence, 281 residues long: Proteasome subunit beta (281 aa).

A propeptide spans 1 to 53 (MEANTRSTGRLPAAFLTPGSSSFMDFLSDQSPEMLPGNRSLPPLQGAVEAPHG) (removed in mature form; by autocatalysis). Threonine 54 acts as the Nucleophile in catalysis.

Belongs to the peptidase T1B family. The 20S proteasome core is composed of 14 alpha and 14 beta subunits that assemble into four stacked heptameric rings, resulting in a barrel-shaped structure. The two inner rings, each composed of seven catalytic beta subunits, are sandwiched by two outer rings, each composed of seven alpha subunits. The catalytic chamber with the active sites is on the inside of the barrel. Has a gated structure, the ends of the cylinder being occluded by the N-termini of the alpha-subunits. Is capped by the proteasome-associated ATPase, ARC.

Its subcellular location is the cytoplasm. The enzyme catalyses Cleavage of peptide bonds with very broad specificity.. Its pathway is protein degradation; proteasomal Pup-dependent pathway. With respect to regulation, the formation of the proteasomal ATPase ARC-20S proteasome complex, likely via the docking of the C-termini of ARC into the intersubunit pockets in the alpha-rings, may trigger opening of the gate for substrate entry. Interconversion between the open-gate and close-gate conformations leads to a dynamic regulation of the 20S proteasome proteolysis activity. Component of the proteasome core, a large protease complex with broad specificity involved in protein degradation. The chain is Proteasome subunit beta from Streptomyces griseus subsp. griseus (strain JCM 4626 / CBS 651.72 / NBRC 13350 / KCC S-0626 / ISP 5235).